A 95-amino-acid chain; its full sequence is MQITDVRVRKIAAEGKMKAIVSVTFDNEFVVHDIKVIEGQNGLFIAMPSRKTPDGEYKDIAHPINTETREKIQKSIIEEYERAKMEEESSEKVQE.

This sequence belongs to the SpoVG family.

Its function is as follows. Could be involved in septation. The protein is Putative septation protein SpoVG of Clostridium botulinum (strain ATCC 19397 / Type A).